The chain runs to 318 residues: NADH-ubiquinone oxidoreductase chain 1 (318 aa).

A run of 8 helical transmembrane segments spans residues 2–22 (LLTN…FLTL), 69–89 (LMFI…WAPL), 102–122 (ILFI…SGWA), 147–167 (AIIL…TLTI), 172–192 (MWLI…TLAE), 231–251 (IILM…NPLF), 253–273 (ELHT…FLWI), and 294–314 (LPLT…LAGI).

This sequence belongs to the complex I subunit 1 family.

The protein localises to the mitochondrion inner membrane. The catalysed reaction is a ubiquinone + NADH + 5 H(+)(in) = a ubiquinol + NAD(+) + 4 H(+)(out). Its function is as follows. Core subunit of the mitochondrial membrane respiratory chain NADH dehydrogenase (Complex I) that is believed to belong to the minimal assembly required for catalysis. Complex I functions in the transfer of electrons from NADH to the respiratory chain. The immediate electron acceptor for the enzyme is believed to be ubiquinone. This Bradypus variegatus (Brown-throated three-fingered sloth) protein is NADH-ubiquinone oxidoreductase chain 1 (MT-ND1).